Consider the following 101-residue polypeptide: UPF0473 protein SUB1774 (101 aa).

This sequence belongs to the UPF0473 family.

In Streptococcus uberis (strain ATCC BAA-854 / 0140J), this protein is UPF0473 protein SUB1774.